Consider the following 187-residue polypeptide: MTEEIDFILDSTKESMEGSIAHLEKEFLNIRAGKASPAMLGSVFVDYYGSATPLSQVAKISVPDARTITLQPFEKNMLQVIEKAIMIANIGFNPMNNGDVIIISVPPLTEERRRELAKQAKTEAEDAKIGVRNVRKDSNSDIKKLEKEGTSEDACKIAEESVQKLTDSFIRKVDELLVVKEAEIMKV.

Belongs to the RRF family.

It localises to the cytoplasm. In terms of biological role, responsible for the release of ribosomes from messenger RNA at the termination of protein biosynthesis. May increase the efficiency of translation by recycling ribosomes from one round of translation to another. This is Ribosome-recycling factor from Flavobacterium psychrophilum (strain ATCC 49511 / DSM 21280 / CIP 103535 / JIP02/86).